The sequence spans 506 residues: tRNA (guanine(6)-N(2))-methyltransferase THUMP3 (506 aa).

The interval lysine 144–valine 172 is disordered. Positions glutamine 157–valine 172 are enriched in basic and acidic residues. Positions lysine 170–leucine 286 constitute a THUMP domain.

The protein belongs to the methyltransferase superfamily. As to quaternary structure, part of the heterodimeric THUMPD3-TRM112 methyltransferase complex; this complex forms an active tRNA methyltransferase, where TRMT112 acts as an activator of the catalytic subunit THUMPD3.

The protein localises to the cytoplasm. It catalyses the reaction guanosine(6) in tRNA + S-adenosyl-L-methionine = N(2)-methylguanosine(6) in tRNA + S-adenosyl-L-homocysteine + H(+). The catalysed reaction is guanosine(7) in tRNA + S-adenosyl-L-methionine = N(2)-methylguanosine(7) in tRNA + S-adenosyl-L-homocysteine + H(+). Its function is as follows. Catalytic subunit of the THUMPD3-TRM112 methyltransferase complex, that specifically mediates the S-adenosyl-L-methionine-dependent N(2)-methylation of guanosine nucleotide at position 6 (m2G6) in tRNAs. This is one of the major tRNA (guanine-N(2))-methyltransferases. Also catalyzes the S-adenosyl-L-methionine-dependent N(2)-methylation of guanosine nucleotide at position 7 of tRNA(Trp). This Bos taurus (Bovine) protein is tRNA (guanine(6)-N(2))-methyltransferase THUMP3.